The following is a 1444-amino-acid chain: DNA polymerase III PolC-type (1444 aa).

The region spanning 428 to 584 (YCVFDVETTG…FDAEATAYLA (157 aa)) is the Exonuclease domain.

The protein belongs to the DNA polymerase type-C family. PolC subfamily.

It is found in the cytoplasm. It carries out the reaction DNA(n) + a 2'-deoxyribonucleoside 5'-triphosphate = DNA(n+1) + diphosphate. Functionally, required for replicative DNA synthesis. This DNA polymerase also exhibits 3' to 5' exonuclease activity. The protein is DNA polymerase III PolC-type of Listeria monocytogenes serovar 1/2a (strain ATCC BAA-679 / EGD-e).